Here is a 220-residue protein sequence, read N- to C-terminus: Adenylate kinase (220 aa).

Residue glycine 10–threonine 15 coordinates ATP. The interval serine 30–valine 59 is NMP. AMP contacts are provided by residues threonine 31, arginine 36, glycine 57–valine 59, glycine 85–arginine 88, and glutamine 92. An LID region spans residues glycine 126–aspartate 163. Arginine 127 is an ATP binding site. Positions 130, 133, 150, and 153 each coordinate Zn(2+). AMP is bound by residues arginine 160 and arginine 171. Residue leucine 199 coordinates ATP.

Belongs to the adenylate kinase family. As to quaternary structure, monomer.

The protein localises to the cytoplasm. The catalysed reaction is AMP + ATP = 2 ADP. The protein operates within purine metabolism; AMP biosynthesis via salvage pathway; AMP from ADP: step 1/1. Its function is as follows. Catalyzes the reversible transfer of the terminal phosphate group between ATP and AMP. Plays an important role in cellular energy homeostasis and in adenine nucleotide metabolism. This chain is Adenylate kinase, found in Pelobacter propionicus (strain DSM 2379 / NBRC 103807 / OttBd1).